Consider the following 2230-residue polypeptide: Probable serine/threonine-protein kinase DDB_G0267686 (2230 aa).

A compositionally biased stretch (low complexity) spans 1–12 (MEPNNNISNSNN). Disordered regions lie at residues 1–22 (MEPN…GDGK), 121–152 (NNNS…QLNN), 270–352 (DEKE…DKIS), 368–397 (PIIN…RLSS), 430–451 (NGAS…ILST), 464–574 (KNSS…NSPS), 593–620 (GSGS…NSST), 699–849 (QHQQ…LLPS), and 915–974 (SNQI…SSNS). The span at 270 to 336 (DEKENKEGGQ…NENEKNHNDK (67 aa)) shows a compositional bias: basic and acidic residues. Over residues 337-346 (NDDDDDDEDN) the composition is skewed to acidic residues. Composition is skewed to low complexity over residues 375–388 (SSSN…NNSI), 430–447 (NGAS…GPTP), 473–574 (NNNN…NSPS), 593–602 (GSGSSSLGKG), 610–619 (SYSNNNNNSS), and 699–721 (QHQQ…QQQL). Polar residues predominate over residues 722 to 731 (KSRSNTTNTP). Over residues 745-754 (NSPPVSPPSS) the composition is skewed to pro residues. Low complexity-rich tracts occupy residues 755 to 766 (PMLSPLSSSPPS) and 783 to 818 (TGSL…RSNS). Polar residues predominate over residues 840–849 (YNTTPPLLPS). The 129-residue stretch at 991–1119 (SLSALMKDRI…CILHSTTNGT (129 aa)) folds into the RGS domain. Disordered regions lie at residues 1146–1181 (SKET…INNN), 1220–1243 (KLSH…NQPL), 1300–1362 (LSPP…GDQT), 1506–1546 (QQQQ…QPQQ), 1563–1611 (PTIP…NNNS), 1725–1771 (VSNN…NNGN), 1802–1848 (NNLM…NNNH), and 1905–1929 (ENNT…TISQ). 2 stretches are compositionally biased toward low complexity: residues 1149 to 1181 (TSNS…INNN) and 1222 to 1239 (SHSN…SYTS). Residues 1324 to 1353 (TNGSMKSSLFQQQLQPTGSINSSPINNHQV) are compositionally biased toward polar residues. Composition is skewed to low complexity over residues 1506 to 1520 (QQQQ…QFQP) and 1530 to 1546 (PSSN…QPQQ). Residues 1726–1769 (SNNNNINSNNNNNNNNNNNNNNNNNNNNNNNNNNNNNNNSNNNN) show a composition bias toward low complexity. A compositionally biased stretch (low complexity) spans 1905-1915 (ENNTTTTTTTT). Polar residues predominate over residues 1916–1929 (SNRPFRSNNPTISQ). Residues 1949–2208 (IVFLNKLGEG…SCPEILDSLL (260 aa)) enclose the Protein kinase domain. Residues 1955–1963 (LGEGTSAKV) and K1976 contribute to the ATP site. D2069 serves as the catalytic Proton acceptor.

Belongs to the protein kinase superfamily. TKL Ser/Thr protein kinase family.

The enzyme catalyses L-seryl-[protein] + ATP = O-phospho-L-seryl-[protein] + ADP + H(+). The catalysed reaction is L-threonyl-[protein] + ATP = O-phospho-L-threonyl-[protein] + ADP + H(+). The polypeptide is Probable serine/threonine-protein kinase DDB_G0267686 (Dictyostelium discoideum (Social amoeba)).